We begin with the raw amino-acid sequence, 580 residues long: Arginine--tRNA ligase (580 aa).

A 'HIGH' region motif is present at residues Ala-131 to His-141.

This sequence belongs to the class-I aminoacyl-tRNA synthetase family. In terms of assembly, monomer.

The protein resides in the cytoplasm. It catalyses the reaction tRNA(Arg) + L-arginine + ATP = L-arginyl-tRNA(Arg) + AMP + diphosphate. This Ruegeria sp. (strain TM1040) (Silicibacter sp.) protein is Arginine--tRNA ligase.